Consider the following 353-residue polypeptide: Nicotinate-nucleotide--dimethylbenzimidazole phosphoribosyltransferase (353 aa).

Glutamate 318 (proton acceptor) is an active-site residue.

Belongs to the CobT family.

The catalysed reaction is 5,6-dimethylbenzimidazole + nicotinate beta-D-ribonucleotide = alpha-ribazole 5'-phosphate + nicotinate + H(+). It functions in the pathway nucleoside biosynthesis; alpha-ribazole biosynthesis; alpha-ribazole from 5,6-dimethylbenzimidazole: step 1/2. Functionally, catalyzes the synthesis of alpha-ribazole-5'-phosphate from nicotinate mononucleotide (NAMN) and 5,6-dimethylbenzimidazole (DMB). This is Nicotinate-nucleotide--dimethylbenzimidazole phosphoribosyltransferase from Desulforudis audaxviator (strain MP104C).